We begin with the raw amino-acid sequence, 281 residues long: Nhr-229 coiled coil domain containing nccd-1 (281 aa).

This is Nhr-229 coiled coil domain containing nccd-1 from Caenorhabditis elegans.